The sequence spans 144 residues: D-aminoacyl-tRNA deacylase (144 aa).

The Gly-cisPro motif, important for rejection of L-amino acids motif lies at 136–137 (GP).

It belongs to the DTD family. Homodimer.

It is found in the cytoplasm. It carries out the reaction glycyl-tRNA(Ala) + H2O = tRNA(Ala) + glycine + H(+). The catalysed reaction is a D-aminoacyl-tRNA + H2O = a tRNA + a D-alpha-amino acid + H(+). Functionally, an aminoacyl-tRNA editing enzyme that deacylates mischarged D-aminoacyl-tRNAs. Also deacylates mischarged glycyl-tRNA(Ala), protecting cells against glycine mischarging by AlaRS. Acts via tRNA-based rather than protein-based catalysis; rejects L-amino acids rather than detecting D-amino acids in the active site. By recycling D-aminoacyl-tRNA to D-amino acids and free tRNA molecules, this enzyme counteracts the toxicity associated with the formation of D-aminoacyl-tRNA entities in vivo and helps enforce protein L-homochirality. This chain is D-aminoacyl-tRNA deacylase, found in Aliivibrio fischeri (strain MJ11) (Vibrio fischeri).